Reading from the N-terminus, the 638-residue chain is Threonine--tRNA ligase (638 aa).

Residues 1–63 enclose the TGS domain; it reads MVMIQIELPD…TESGRLEIIT (63 aa). The tract at residues 245–536 is catalytic; it reads DHRRIGRELD…LIEHYAGNFP (292 aa). Residues Cys-337, His-388, and His-513 each contribute to the Zn(2+) site.

This sequence belongs to the class-II aminoacyl-tRNA synthetase family. Homodimer. The cofactor is Zn(2+).

Its subcellular location is the cytoplasm. The enzyme catalyses tRNA(Thr) + L-threonine + ATP = L-threonyl-tRNA(Thr) + AMP + diphosphate + H(+). Its function is as follows. Catalyzes the attachment of threonine to tRNA(Thr) in a two-step reaction: L-threonine is first activated by ATP to form Thr-AMP and then transferred to the acceptor end of tRNA(Thr). Also edits incorrectly charged L-seryl-tRNA(Thr). In Syntrophotalea carbinolica (strain DSM 2380 / NBRC 103641 / GraBd1) (Pelobacter carbinolicus), this protein is Threonine--tRNA ligase.